A 465-amino-acid polypeptide reads, in one-letter code: L-seryl-tRNA(Sec) selenium transferase (465 aa).

The residue at position 294 (Lys-294) is an N6-(pyridoxal phosphate)lysine.

The protein belongs to the SelA family. It depends on pyridoxal 5'-phosphate as a cofactor.

The protein localises to the cytoplasm. It catalyses the reaction L-seryl-tRNA(Sec) + selenophosphate + H(+) = L-selenocysteinyl-tRNA(Sec) + phosphate. It participates in aminoacyl-tRNA biosynthesis; selenocysteinyl-tRNA(Sec) biosynthesis; selenocysteinyl-tRNA(Sec) from L-seryl-tRNA(Sec) (bacterial route): step 1/1. Its function is as follows. Converts seryl-tRNA(Sec) to selenocysteinyl-tRNA(Sec) required for selenoprotein biosynthesis. The sequence is that of L-seryl-tRNA(Sec) selenium transferase from Maridesulfovibrio salexigens (strain ATCC 14822 / DSM 2638 / NCIMB 8403 / VKM B-1763) (Desulfovibrio salexigens).